Reading from the N-terminus, the 296-residue chain is tRNA dimethylallyltransferase (296 aa).

Residue 11–18 (GPTAVGKT) participates in ATP binding. Residue 13 to 18 (TAVGKT) coordinates substrate. The interval 36-39 (DSQQ) is interaction with substrate tRNA.

The protein belongs to the IPP transferase family. Monomer. Mg(2+) serves as cofactor.

The catalysed reaction is adenosine(37) in tRNA + dimethylallyl diphosphate = N(6)-dimethylallyladenosine(37) in tRNA + diphosphate. Catalyzes the transfer of a dimethylallyl group onto the adenine at position 37 in tRNAs that read codons beginning with uridine, leading to the formation of N6-(dimethylallyl)adenosine (i(6)A). This is tRNA dimethylallyltransferase from Streptococcus agalactiae serotype III (strain NEM316).